The chain runs to 1674 residues: MSVHTSHSRHNIGSLEVSSSQKISASSGLVHSSRLELHLKADMSECENHDPFVNAGSKTIDINSTYVISACKKTRETPVTSDPRRLSLQRRATCGDRESSLLGSELGNRRTADTSLRLQRRHGRADYVGKWETLNPVGGNPGSDSASQASRTEAKGVNNDTRVLSSVVSVKDSNDTGLTRCKDPGPPVGASNEKVTVKDTNSRAPVGSQRQTEAMRSGHLVVQLTESKSDTPVSGGRNSHRGNAGKDTAKQVGTFGSSDTRTPVKCVLEHRWTPRHDPPPPKSPALSTPKNNGKDIPKHGSTFRSASSESRTPVKCVPEHRWTPRHDLPPPKSPALSTLKNRIASPRVKPRPKSSLFANKRESSRESTLPPEENSLVQKTFTEPDSLKVENSQVTVAVRVRPFSKREKTEKASQVVFTNGEEITVEHPDMKQVYSFIYDVSFWSFDECHPGYASQTTVYETLAAPLLDRAFEGYNTCLFAYGQTGSGKSYTMMGLNEEPGIIPRFCEDLFAQIAKKQTSEVSYHLEMSFFEVYNEKIHDLLVCKGENGQRKQPLRAREHPVSGPYVEGLSMNVVSSYSDIQSWLELGNKQRATAATGMNDKSSRSHSVFTLVMTQTKTEVVEGEEHDHRITSRINLVDLAGSERCSTAHSSGQRLKEGVSINKSLLTLGKVISALSEQANGKRVFIPYRESTLTWLLKESLGGNSKTAMIATVSPAASNIEETLSTLRYATQARLIVNIAKVNEDMNAKLIRELKAEIEKLKAAQRSNRNIDPERYRLCRQEITSLRMKLHQQERDMAEIQRVWKEKFEQAEKRKLQETKELQKAGVTFQMDNHLPNLVNLNEDPQLSEMLLYMVKEGVTTVGKHTPSSSHDIQLSGVLIADDHCTIRNFGGTVSIVPAGEAKTYVNGTHISEPTVLHHGDRVVLGGDHYFRFNHPVEVQKGKKLSSRNNLTTSEGPKDFEFAKNELLTAQRSRLEAEIKDAQLKAKEEMMQGIQIAKEMAQQELSSQKAVYERKIQALEAELREESQRKRLEELNNQKASHKIEELERAKQHLEQEVYVNKRRLEMETLATKQALEDHRIRHARILEALEIEKQKIAEEVQMLQENRGNRDKTFTIQPNWNSMKLSTMIQEANAISDKFKKCYIFGRHDASDKGRSDTSVRVRNLQLGISTFWSLEKFESKLAAMKELYESNGGDRDEDVFCDPADEWEPDITSTPVSSLSRRRSRSLMKNRRVSGCLHDIHPIQSMQSSHSSGLMEKPSTIYSNSSESFLPGICKELIGSSIDFLGQSFDEEKTIADSLINNLLRLHNGVIAISKAHEEQDEESQDNLFSDRAAQALTIQVACAFEQLVVLFKHWLGDFLPCTGSARLEDELRQDIKKLGGYLQLFLQGCCSDISSMVKEAQNKVMKIIQQAVQCVGQLAVLKGSKLCVLENSSKVSSTQEFMAALQDGVTSGMKSLLDSGLETAQDLRQDLSRQSAREEVTKQMKASTVEWVGSLENAVAEWRTKSFRTQAQEGSRQQVSKLLSLASEFLKLKSCLQQTVEMIVSALRGCPSDLHCLRSCTETICSLARKLHSDFSAHSASAGSCGNELPRADCEELESLAKSLLLCFECGESPGLSKPWESCSSNSKEEQCKSDRADCGKSGPRRACEPHGDATPAVSSGDCTPNRIQWV.

Residues 1 to 391 (MSVHTSHSRH…TEPDSLKVEN (391 aa)) are required for PRC1-binding. Disordered regions lie at residues 132–158 (ETLN…KGVN) and 171–374 (KDSN…PEEN). 2 stretches are compositionally biased toward polar residues: residues 142-151 (GSDSASQASR) and 202-214 (SRAP…QTEA). Ser257 carries the phosphoserine modification. Position 262 is a phosphothreonine (Thr262). Basic and acidic residues predominate over residues 267–279 (VLEHRWTPRHDPP). Positions 302–311 (TFRSASSESR) are enriched in polar residues. Basic and acidic residues predominate over residues 317–329 (VPEHRWTPRHDLP). The interval 391-772 (NSQVTVAVRV…AAQRSNRNID (382 aa)) is required for microtubule-binding with high affinity. Positions 393-736 (QVTVAVRVRP…LRYATQARLI (344 aa)) constitute a Kinesin motor domain. Position 482–489 (482–489 (GQTGSGKS)) interacts with ATP. Residues 743–826 (NEDMNAKLIR…QETKELQKAG (84 aa)) adopt a coiled-coil conformation. In terms of domain architecture, FHA spans 860-911 (TTVGKHTPSSSHDIQLSGVLIADDHCTIRNFGGTVSIVPAGEAKTYVNGTHI). Residues 936-1674 (PVEVQKGKKL…DCTPNRIQWV (739 aa)) form a required for CIT-binding region. Residues 961 to 1110 (EFAKNELLTA…VQMLQENRGN (150 aa)) are a coiled coil. Ser973 and Ser1326 each carry phosphoserine. Residues 1618–1674 (GLSKPWESCSSNSKEEQCKSDRADCGKSGPRRACEPHGDATPAVSSGDCTPNRIQWV) form a disordered region. Residues 1630–1642 (SKEEQCKSDRADC) are compositionally biased toward basic and acidic residues. Residues 1660–1674 (AVSSGDCTPNRIQWV) show a composition bias toward polar residues.

This sequence belongs to the TRAFAC class myosin-kinesin ATPase superfamily. Kinesin family. In terms of assembly, directly interacts with PRC1 within a complex also containing KIF4A, KIF20A and KIF23; targets to the central spindle. Directly interacts with CIT depending on the activation state of the kinase (stronger interaction with the kinase-dead form); targets to the midbody. Interacts with ARRB2; the interaction is detected in the nucleus upon OR1D2 stimulation. Interacts with AKT1; the interaction is detected in the plasma membrane upon INS stimulation and promotes AKT1 phosphorylation. Interacts with SVIL; at midbody during cytokinesis. Interacts with RADIL (via PDZ domain); recruits RADIL to the microtubule network restricting RADIL from interaction with activated RAP1A.

The protein localises to the nucleus. It localises to the cytoplasm. Its subcellular location is the cytoskeleton. It is found in the spindle. The protein resides in the midbody. Its function is as follows. Microtubule motor protein that binds to microtubules with high affinity through each tubulin heterodimer and has an ATPase activity. Plays a role in many processes like cell division, cytokinesis and also in cell proliferation and apoptosis. During cytokinesis, targets to central spindle and midbody through its interaction with PRC1 and CIT respectively. Regulates cell growth through regulation of cell cycle progression and cytokinesis. During cell cycle progression acts through SCF-dependent proteasomal ubiquitin-dependent protein catabolic process which controls CDKN1B degradation, resulting in positive regulation of cyclins, including CCNE1, CCND1 and CCNB1. During late neurogenesis, regulates the cerebellar and cerebral cortex development and olfactory bulb development through regulation of apoptosis, cell proliferation and cell division. Also is required for chromosome congression and alignment during mitotic cell cycle process. Regulates cell spreading, focal adhesion dynamics, and cell migration through its interaction with RADIL resulting in regulation of RAP1A-mediated inside-out integrin activation by tethering RADIL on microtubules. This is Kinesin-like protein KIF14 from Mus musculus (Mouse).